Consider the following 152-residue polypeptide: Large ribosomal subunit protein bL9 (152 aa).

This sequence belongs to the bacterial ribosomal protein bL9 family.

Its function is as follows. Binds to the 23S rRNA. The protein is Large ribosomal subunit protein bL9 of Prochlorococcus marinus (strain MIT 9313).